Consider the following 1174-residue polypeptide: ATP-dependent DNA helicase SRS2 (1174 aa).

Residues 14-316 (QLNTQQRAAA…IILVENYRSS (303 aa)) form the UvrD-like helicase ATP-binding domain. Position 38–43 (38–43 (GTGKTK)) interacts with ATP. The tract at residues 222-243 (LLMYTFRLLTRVRVLSNIKHVL) is leucine-zipper. Arginine 314 provides a ligand contact to ATP. In terms of domain architecture, UvrD-like helicase C-terminal spans 317-654 (QKILNTSEIL…TISTIHGAKG (338 aa)). The segment at 676–704 (DDKKDESEEDEEEDQENSKKDASPKKTRV) is disordered. Serine 833 is subject to Phosphoserine. Disordered stretches follow at residues 865-896 (SKIN…SPTK), 909-973 (NVPS…DKVT), and 994-1024 (ELHP…SNSD). Polar residues-rich tracts occupy residues 909 to 922 (NVPS…STGK) and 935 to 955 (TDIS…NKTS). Over residues 956 to 973 (HMSDDLMRPSPTRKDKVT) the composition is skewed to basic and acidic residues. Positions 1007–1023 (SLTSSEFSGFSSACSNS) are enriched in low complexity.

It belongs to the helicase family. UvrD subfamily.

The protein localises to the nucleus. It catalyses the reaction Couples ATP hydrolysis with the unwinding of duplex DNA by translocating in the 3'-5' direction.. The enzyme catalyses ATP + H2O = ADP + phosphate + H(+). Its function is as follows. ATP-dependent DNA helicase involved in DNA repair at least for UV-induced lesions. The polarity of the helicase activity was determined to be 3' to 5'. This chain is ATP-dependent DNA helicase SRS2 (SRS2), found in Saccharomyces cerevisiae (strain ATCC 204508 / S288c) (Baker's yeast).